A 325-amino-acid polypeptide reads, in one-letter code: MATRRLTDAFLLLRNNSIQNRQLLAEQVSSHITSSPLHSRSIAAELDELADDRMALVSGISLDPEAAIGVTKRPPPKWVDGVDEIQYDVGRIKQKMKELASLHDKHLNRPTLDDSSEEEHAIEITTQEITQLFHRCQRAVQALPSRARACSEQEGRLLGNVVASLAQALQELSTSFRHAQSGYLKRMKNREERSQHFFDTSVPLMDDGDDNTLYHRGFTEDQLVLVEQNTLMVEEREREIRQIVQSISDLNEIFRDLGAMIVEQGTVLDRIDYNVEQSCIKTEDGLKQLHKAEQYQKKNRKMLVILILFVIIIVLIVVLVGVKSR.

Residues 1 to 301 (MATRRLTDAF…AEQYQKKNRK (301 aa)) are Cytoplasmic-facing. Ser41 carries the post-translational modification Phosphoserine. One can recognise a t-SNARE coiled-coil homology domain in the interval 230-292 (TLMVEERERE…EDGLKQLHKA (63 aa)). A helical; Anchor for type IV membrane protein membrane pass occupies residues 302 to 322 (MLVILILFVIIIVLIVVLVGV). At 323–325 (KSR) the chain is on the vesicular side.

It belongs to the syntaxin family. In terms of assembly, interacts with GCC2. Interacts with BAIAP3; this interaction is increased in the presence of calcium. As to expression, ubiquitous.

The protein resides in the golgi apparatus membrane. It localises to the cytoplasm. Its function is as follows. SNARE involved in vesicular transport from the late endosomes to the trans-Golgi network. This chain is Syntaxin-16 (STX16), found in Homo sapiens (Human).